The primary structure comprises 779 residues: Probable ATP-dependent RNA helicase DHX40 (779 aa).

The tract at residues 1–53 is disordered; the sequence is MSRFPAVAGRAPRRQEEGERSRDLQEERPSAVCIADREEKGCTSQEGGTTPTF. The segment covering 13-41 has biased composition (basic and acidic residues); it reads RRQEEGERSRDLQEERPSAVCIADREEKG. The segment covering 42-53 has biased composition (polar residues); it reads CTSQEGGTTPTF. The region spanning 63–231 is the Helicase ATP-binding domain; it reads IQAVRDNSFL…FGNCPIFDIP (169 aa). ATP is bound at residue 76–83; that stretch reads GNTGSGKT. Positions 173–176 match the DEAH box motif; that stretch reads DEAH. One can recognise a Helicase C-terminal domain in the interval 263-442; the sequence is TMDIHLNEMA…SVVLTLKCLA (180 aa). Residues 737–779 form a disordered region; it reads SKDVLKKMQRRNDDKSISDARARFLERKQQRTQDHSDTRKETG.

The protein belongs to the DEAD box helicase family. DEAH subfamily.

The enzyme catalyses ATP + H2O = ADP + phosphate + H(+). Its function is as follows. Probable ATP-dependent RNA helicase. This is Probable ATP-dependent RNA helicase DHX40 (DHX40) from Pongo abelii (Sumatran orangutan).